Here is a 195-residue protein sequence, read N- to C-terminus: GTP-dependent dephospho-CoA kinase (195 aa).

The GTP site is built by aspartate 49, valine 50, aspartate 68, glutamate 127, and aspartate 150.

Belongs to the GTP-dependent DPCK family.

The catalysed reaction is 3'-dephospho-CoA + GTP = GDP + CoA + H(+). It participates in cofactor biosynthesis; coenzyme A biosynthesis. Functionally, catalyzes the GTP-dependent phosphorylation of the 3'-hydroxyl group of dephosphocoenzyme A to form coenzyme A (CoA). In Methanosarcina mazei (strain ATCC BAA-159 / DSM 3647 / Goe1 / Go1 / JCM 11833 / OCM 88) (Methanosarcina frisia), this protein is GTP-dependent dephospho-CoA kinase.